The primary structure comprises 528 residues: MIKKVLQLLIFHLTLAEIVLSGNVVVWPTDGSHWLNIKILLEELVQRNHSVTVLAPSETLFINSRLDAFINFEEIPVSYTKSKIDEIIEHMIALWLDHRPTPLTMWTFYKELGNLLATFYTTNKQMCDGVLNNPTVMERLQKGGFDVLLADPVTMCGELVALKLGIPFVYTLRFSPAFTVERHCGKIPAPISYVPAALSELTDQMSFGERVKNIISYSLQDYIFKTYWGEWNSYYSKVLGRPTTLCETMGKAEIWLMRTYWDFEFPRPYLPNFEFVGGLHCKPAKPLPKEMEEFVQTSGEHGIVVFSLGSMVKNLTDEKANLIASALAQIPQKVLWRYKGKIPDTLGSNTRLFDWIPQNDLLGHPKTRAFITHGGTNGIYEAIYHGIPMVGVPMFADQPDNIAHMKAKGAAVEVNMNTMTSSDLLNALRTVINEPSYKENAMRLSRIHHDQPVKPLDRAVFWIEFVMRHKGAKHLRVAAHDLSWFQYHSLDVIGFLLACVASAILLVAKCCLFIFQKVGKTGKKKKRD.

A signal peptide spans 1-21 (MIKKVLQLLIFHLTLAEIVLS). Over 22–494 (GNVVVWPTDG…FQYHSLDVIG (473 aa)) the chain is Extracellular. N-linked (GlcNAc...) asparagine glycans are attached at residues N48 and N314. Residues 495-515 (FLLACVASAILLVAKCCLFIF) form a helical membrane-spanning segment. Topologically, residues 516–528 (QKVGKTGKKKKRD) are cytoplasmic.

Belongs to the UDP-glycosyltransferase family.

The protein resides in the membrane. It carries out the reaction glucuronate acceptor + UDP-alpha-D-glucuronate = acceptor beta-D-glucuronoside + UDP + H(+). It catalyses the reaction 17alpha-estradiol + UDP-alpha-D-glucuronate = 17alpha-estradiol 3-O-(beta-D-glucuronate) + UDP + H(+). The catalysed reaction is 17beta-estradiol + UDP-alpha-D-glucuronate = 17beta-estradiol 3-O-(beta-D-glucuronate) + UDP + H(+). The enzyme catalyses chenodeoxycholate + UDP-alpha-D-glucuronate = chenodeoxycholoyl-24-O-(beta-D-glucuronate) + UDP. It carries out the reaction lithocholate + UDP-alpha-D-glucuronate = lithocholoyl-24-O-(beta-D-glucuronate) + UDP. It catalyses the reaction deoxycholate + UDP-alpha-D-glucuronate = deoxycholoyl-24-O-(beta-D-glucuronate) + UDP. The catalysed reaction is hyocholate + UDP-alpha-D-glucuronate = hyocholoyl-24-O-(beta-D-glucuronate) + UDP. The enzyme catalyses hyodeoxycholate + UDP-alpha-D-glucuronate = hyodeoxycholate 6-O-(beta-D-glucuronate) + UDP + H(+). UDP-glucuronosyltransferase (UGT) that catalyzes phase II biotransformation reactions in which lipophilic substrates are conjugated with glucuronic acid to increase the metabolite's water solubility, thereby facilitating excretion into either the urine or bile. Essential for the elimination and detoxification of drugs, xenobiotics and endogenous compounds. Catalyzes the glucuronidation of endogenous estrogen hormone estradiol. Contributes to bile acid (BA) detoxification by catalyzing the glucuronidation of BA substrates, which are natural detergents for dietary lipids absorption. Potential role in detoxification of toxic waste compounds in the amniotic fluid before birth, and air-born chemical after birth. This Mus musculus (Mouse) protein is UDP-glucuronosyltransferase 2A2.